The primary structure comprises 245 residues: 8-amino-3,8-dideoxy-manno-octulosonate cytidylyltransferase (245 aa).

The protein belongs to the KdsB family.

The protein localises to the cytoplasm. It catalyses the reaction 8-amino-3,8-dideoxy-alpha-D-manno-octulosonate + CTP = CMP-8-amino-3,8-dideoxy-alpha-D-manno-oct-2-ulosonate + diphosphate. It functions in the pathway bacterial outer membrane biogenesis; lipopolysaccharide biosynthesis. Its function is as follows. Activates KDO8N (a required 8-carbon sugar) for incorporation into bacterial lipopolysaccharide in the Shewanella genus. This is 8-amino-3,8-dideoxy-manno-octulosonate cytidylyltransferase from Shewanella baltica (strain OS223).